We begin with the raw amino-acid sequence, 438 residues long: UDP-N-acetylmuramoylalanine--D-glutamate ligase (438 aa).

105–111 contributes to the ATP binding site; the sequence is GSNGKTT.

It belongs to the MurCDEF family.

Its subcellular location is the cytoplasm. It carries out the reaction UDP-N-acetyl-alpha-D-muramoyl-L-alanine + D-glutamate + ATP = UDP-N-acetyl-alpha-D-muramoyl-L-alanyl-D-glutamate + ADP + phosphate + H(+). Its pathway is cell wall biogenesis; peptidoglycan biosynthesis. In terms of biological role, cell wall formation. Catalyzes the addition of glutamate to the nucleotide precursor UDP-N-acetylmuramoyl-L-alanine (UMA). The polypeptide is UDP-N-acetylmuramoylalanine--D-glutamate ligase (Oenococcus oeni (strain ATCC BAA-331 / PSU-1)).